A 608-amino-acid chain; its full sequence is MCGIVGYSGKKEASSILVEGLSKLEYRGYDSAGVAILNDGKINVSKCKGRLVNLENKLEENPIAGNIGIGHTRWATHGEPSDLNAHPHSNKDNTISVVHNGIIENYMQLRTWLKSKGYEFKSETDTEVIPNLVDYFYEGNLLDAVIKAISKVEGSYALGIVSSKEPDKVVAVRKDSPLIVGISEDGNFIASDVPAILNHTRDIYYIKDKEFVVLTSEGVEFYSNEGEKIEKELNHIEWDANAAEKGGYEHFMLKEIYEQPKAIRDTMTSRIIAGQPIKLDDISITKEQIENIDKIYIVACGTAYHAGVVGKYVIEKFARIPVEVDIASEFRYRDPIITKNTLMIVLSQSGETADTLAALREAKSIGARVIAVTNVVGSSVARAADDILYTWAGPEIAVASTKAYTTQLITMYILGLFFAQNKNTLTNEEIEKIKADMLTLPEKAEEVLASKEKVQKFAANTYMHKDMFYLGRGIDYAVAMEGALKLKEISYIHAEAYAGGELKHGTIALIEEGTVVVALGTQSDIYDKMVSNIKEVTTRGAKVLGIAAEGRKGMEEVVDSVIYVPEVNDMLLPVLSVMQLQLLAYYVSVEKGCDVDKPRNLAKSVTVE.

Catalysis depends on Cys2, which acts as the Nucleophile; for GATase activity. A Glutamine amidotransferase type-2 domain is found at 2–217 (CGIVGYSGKK…DKEFVVLTSE (216 aa)). SIS domains are found at residues 285–424 (TKEQ…NKNT) and 453–598 (KVQK…VDKP). Residue Lys603 is the For Fru-6P isomerization activity of the active site.

Homodimer.

It is found in the cytoplasm. It carries out the reaction D-fructose 6-phosphate + L-glutamine = D-glucosamine 6-phosphate + L-glutamate. Functionally, catalyzes the first step in hexosamine metabolism, converting fructose-6P into glucosamine-6P using glutamine as a nitrogen source. This is Glutamine--fructose-6-phosphate aminotransferase [isomerizing] from Clostridium acetobutylicum (strain ATCC 824 / DSM 792 / JCM 1419 / IAM 19013 / LMG 5710 / NBRC 13948 / NRRL B-527 / VKM B-1787 / 2291 / W).